The primary structure comprises 304 residues: D-alanine--D-alanine ligase (304 aa).

The ATP-grasp domain maps to 100–301 (KLVALQSGIP…FGEFLEDLIK (202 aa)). Position 129–184 (129–184 (ERKLGSPFIVKPCDVGSTIGLSLVRSASEYEVALEEAFRFSDRLLLEEFIDGFEVT)) interacts with ATP. Mg(2+)-binding residues include aspartate 256, glutamate 268, and asparagine 270.

This sequence belongs to the D-alanine--D-alanine ligase family. Mg(2+) is required as a cofactor. Mn(2+) serves as cofactor.

Its subcellular location is the cytoplasm. The catalysed reaction is 2 D-alanine + ATP = D-alanyl-D-alanine + ADP + phosphate + H(+). It functions in the pathway cell wall biogenesis; peptidoglycan biosynthesis. Functionally, cell wall formation. This chain is D-alanine--D-alanine ligase, found in Coprothermobacter proteolyticus (strain ATCC 35245 / DSM 5265 / OCM 4 / BT).